Consider the following 355-residue polypeptide: MSEEQFGGDGAAAAATAAVGGSAGEQEGAMVAATQGAAAAAGSGAGTGGGTASGGTEGGSAESEGAKIDASKNEEDEGHSNSSPRHSEAATAQREEWKMFIGGLSWDTTKKDLKDYFSKFGEVVDCTLKLDPITGRSRGFGFVLFKESESVDKVMDQKEHKLNGKVIDPKRAKAMKTKEPVKKIFVGGLSPDTPEEKIREYFGGFGEVESIELPMDNKTNKRRGFCFITFKEEEPVKKIMEKKYHNVGLSKCEIKVAMSKEQYQQQQQWGSRGGFAGRARGRGGGPSQNWNQGYSNYWNQGYGNYGYNSQGYGGYGGYDYTGYNNYYGYGDYSNQQSGYGKVSRRGGHQNSYKPY.

The segment at 1 to 92 is disordered; it reads MSEEQFGGDG…SPRHSEAATA (92 aa). Position 2 is an N-acetylserine (serine 2). Low complexity-rich tracts occupy residues 11-20 and 27-42; these read AAAAATAAVG and EGAM…AAAG. The span at 43–58 shows a compositional bias: gly residues; it reads SGAGTGGGTASGGTEG. The span at 64–73 shows a compositional bias: basic and acidic residues; it reads EGAKIDASKN. Serine 71 carries the post-translational modification Phosphoserine. Residue lysine 72 forms a Glycyl lysine isopeptide (Lys-Gly) (interchain with G-Cter in SUMO2) linkage. Phosphoserine occurs at positions 80, 82, and 83. Residue threonine 91 is modified to Phosphothreonine. RRM domains are found at residues 97–179 and 182–261; these read WKMF…KTKE and KKIF…MSKE. The residue at position 119 (lysine 119) is an N6-methyllysine. At threonine 127 the chain carries Phosphothreonine. Lysine 129 is covalently cross-linked (Glycyl lysine isopeptide (Lys-Gly) (interchain with G-Cter in SUMO2)). N6-acetyllysine is present on lysine 165. Position 190 is a phosphoserine (serine 190). Threonine 193 bears the Phosphothreonine mark. Residue lysine 197 forms a Glycyl lysine isopeptide (Lys-Gly) (interchain with G-Cter in SUMO2) linkage. Residues lysine 243 and lysine 251 each carry the N6-acetyllysine modification. At tyrosine 263 the chain carries Omega-N-methylarginine. Serine 271 bears the Phosphoserine mark. Arginine 272 carries the post-translational modification Omega-N-methylarginine. At glycine 273 the chain carries N6-acetyllysine. An omega-N-methylarginine mark is found at arginine 278, arginine 280, and arginine 282. Position 292 is an N6-acetyllysine (glutamine 292). Arginine 345 carries the asymmetric dimethylarginine; alternate modification. Arginine 345 is modified (dimethylated arginine; alternate). Arginine 345 carries the omega-N-methylarginine; alternate modification.

In terms of assembly, identified in a IGF2BP1-dependent mRNP granule complex containing untranslated mRNAs. Part of a complex associated with the FOS mCRD domain and consisting of PABPC1, PAIP1, CSDE1/UNR and SYNCRIP. Interacts with IGF2BP2. Interacts with GTPBP1. Interacts with EIF4G1; the interaction requires RNA. Interacts with EIF3B and RPS3. Post-translationally, arg-345 is dimethylated, probably to asymmetric dimethylarginine. Methylated by PRMT1, in an insulin-dependent manner. The PRMT1-mediated methylation regulates tyrosine phosphorylation.

It localises to the nucleus. Its subcellular location is the cytoplasm. Binds with high affinity to RNA molecules that contain AU-rich elements (AREs) found within the 3'-UTR of many proto-oncogenes and cytokine mRNAs. Also binds to double- and single-stranded DNA sequences in a specific manner and functions a transcription factor. Each of the RNA-binding domains specifically can bind solely to a single-stranded non-monotonous 5'-UUAG-3' sequence and also weaker to the single-stranded 5'-TTAGGG-3' telomeric DNA repeat. Binds RNA oligonucleotides with 5'-UUAGGG-3' repeats more tightly than the telomeric single-stranded DNA 5'-TTAGGG-3' repeats. Binding of RRM1 to DNA inhibits the formation of DNA quadruplex structure which may play a role in telomere elongation. May be involved in translationally coupled mRNA turnover. Implicated with other RNA-binding proteins in the cytoplasmic deadenylation/translational and decay interplay of the FOS mRNA mediated by the major coding-region determinant of instability (mCRD) domain. May play a role in the regulation of the rhythmic expression of circadian clock core genes. Directly binds to the 3'UTR of CRY1 mRNA and induces CRY1 rhythmic translation. May also be involved in the regulation of PER2 translation. This Homo sapiens (Human) protein is Heterogeneous nuclear ribonucleoprotein D0 (HNRNPD).